Consider the following 758-residue polypeptide: Transcription activator MSS11 (758 aa).

The disordered stretch occupies residues 1–23 (MDNTTNINTNERSSNTDFSSAPN). A LisH domain is found at 51–83 (SKQLLYAHIYNYLIKNNYWNSAAKFLSEADLPL). 5 disordered regions span residues 191 to 220 (TQNSFPVSEESFRPNGDGSNFNLNDPTNRN), 268 to 299 (LQSPAQPQQSSQQQIQQPQHQPQHQPQQQQQQ), 322 to 355 (QQHQQQQQTPYPIVNPQMVPHIPSENSHSTGLMP), 428 to 454 (GNQNYQSNTRNNTAEETTPTNDNNANG), and 587 to 681 (KTNT…TKES). Polar residues predominate over residues 207 to 220 (DGSNFNLNDPTNRN). The segment covering 269–299 (QSPAQPQQSSQQQIQQPQHQPQHQPQQQQQQ) has biased composition (low complexity). Composition is skewed to polar residues over residues 345 to 355 (SENSHSTGLMP), 436 to 454 (TRNNTAEETTPTNDNNANG), and 587 to 600 (KTNTSVPQNDSTSV). The span at 605–664 (NNNNNNNNNNNNNNNNNSNNSNNNNNNNNNNNNSNNTPTVSQPSSKCTSSSSTTPNITTT) shows a compositional bias: low complexity. The span at 667–676 (PKRKQRVGKT) shows a compositional bias: basic residues.

It belongs to the MSS11 family. Interacts with FLO8, STE12 and TEC1.

It is found in the cytoplasm. It localises to the nucleus. In terms of biological role, transcription factor that regulates pseudohyphal differentiation, invasive growth, floculation, adhesion and starch metabolism in response to nutrient availability. In Saccharomyces cerevisiae (strain ATCC 204508 / S288c) (Baker's yeast), this protein is Transcription activator MSS11 (MSS11).